Consider the following 751-residue polypeptide: Semaphorin-3C (751 aa).

The first 21 residues, 1–21 (MAFQAVCILVGVFVCSTYVKG), serve as a signal peptide directing secretion. The 484-residue stretch at 28 to 511 (RVYLTFDELR…SNEGLAQVSL (484 aa)) folds into the Sema domain. Asn81 is a glycosylation site (N-linked (GlcNAc...) asparagine). Cys101 and Cys112 are disulfide-bonded. The N-linked (GlcNAc...) asparagine glycan is linked to Asn123. Cystine bridges form between Cys130–Cys139, Cys266–Cys378, and Cys290–Cys338. Asn268 carries N-linked (GlcNAc...) asparagine glycosylation. The N-linked (GlcNAc...) asparagine glycan is linked to Asn465. The cysteines at positions 514 and 532 are disulfide-linked. Residues 571-655 (AYRNAAEIVQ…TENSFKQTIA (85 aa)) form the Ig-like C2-type domain. N-linked (GlcNAc...) asparagine glycosylation is found at Asn585 and Asn586. Cys592 and Cys643 are joined by a disulfide. A compositionally biased stretch (basic and acidic residues) spans 712–731 (TRQQHQQGEESQKMRGDYGK). The segment at 712–751 (TRQQHQQGEESQKMRGDYGKLKALINSRKSRNRRNQLPES) is disordered.

The protein belongs to the semaphorin family. Interacts with PLXND1.

It is found in the secreted. Binds to plexin family members and plays an important role in the regulation of developmental processes. Required for normal cardiovascular development during embryogenesis. Functions as attractant for growing axons, and thereby plays an important role in axon growth and axon guidance. In Bos taurus (Bovine), this protein is Semaphorin-3C (SEMA3C).